Consider the following 260-residue polypeptide: ATP synthase subunit a (260 aa).

6 helical membrane passes run 37–57, 95–115, 125–145, 154–174, 191–211, and 233–253; these read FTNA…FMTL, FFPF…IGMF, IVVT…TGFV, VFVP…IEII, MLAG…FMTM, and EFLV…MYLH.

Belongs to the ATPase A chain family. In terms of assembly, F-type ATPases have 2 components, CF(1) - the catalytic core - and CF(0) - the membrane proton channel. CF(1) has five subunits: alpha(3), beta(3), gamma(1), delta(1), epsilon(1). CF(0) has three main subunits: a(1), b(2) and c(9-12). The alpha and beta chains form an alternating ring which encloses part of the gamma chain. CF(1) is attached to CF(0) by a central stalk formed by the gamma and epsilon chains, while a peripheral stalk is formed by the delta and b chains.

The protein localises to the cell inner membrane. Functionally, key component of the proton channel; it plays a direct role in the translocation of protons across the membrane. This chain is ATP synthase subunit a, found in Parvibaculum lavamentivorans (strain DS-1 / DSM 13023 / NCIMB 13966).